The primary structure comprises 695 residues: RING finger protein 145 (695 aa).

The next 13 helical transmembrane spans lie at 53–73 (YLALNMHYVGYILSVVLLTLP), 77–97 (LAKLYLYFVAALLLYAGHQIS), 123–143 (FITALVGQLVVCTLCSCVMKT), 146–166 (IWLFSAHMLPLLARLCLVPIE), 168–188 (IVVINKFAMIFTGLEVLYFLA), 225–245 (LVVPVLFMVFWLVLFALQIYT), 275–295 (YSLLGLVFTVSFVALGVLTLC), 316–336 (TEGVTLLILAVQTGLIELQVV), 340–360 (FLLSIILFIVVASILQSMLEI), 384–404 (SLCLFLLVFPSYMAYMICQFF), 410–430 (LLIIISSSILTSLQVLGTLFI), 460–480 (LLEFLVALCVVAYGVSETVFG), and 482–502 (WTVMGSMIIFIHSYYNVWLRA). The RING-type; atypical zinc finger occupies 537 to 575 (CSICYQDMNSAVITPCSHFFHPGCLKKWLYVQETCPLCH). Residues 585 to 603 (ATGESGSSTNPVSEQSATN) are compositionally biased toward polar residues. Residues 585–610 (ATGESGSSTNPVSEQSATNPPLGPVS) form a disordered region.

The protein localises to the membrane. In Xenopus tropicalis (Western clawed frog), this protein is RING finger protein 145 (rnf145).